The sequence spans 711 residues: DNA topoisomerase 1 (711 aa).

The Toprim domain occupies 3–134; sequence KNLVVIESPN…KCQRITFNEI (132 aa). Positions 9 and 102 each coordinate Mg(2+). Residues 150–604 form the Topo IA-type catalytic domain; that stretch reads DQSWVQSQFA…FWSNFKEEVK (455 aa). An interaction with DNA region spans residues 183 to 188; it reads SAGRVQ. Y340 (O-(5'-phospho-DNA)-tyrosine intermediate) is an active-site residue. 2 C4-type zinc fingers span residues 624 to 652 and 673 to 702; these read CPSCASPLLYRYTKRGNEKFVGCSNFPNC and CPECNSQLVKRRTKFNPNKTFVGCSNFPRC.

It belongs to the type IA topoisomerase family. In terms of assembly, monomer. The cofactor is Mg(2+).

It carries out the reaction ATP-independent breakage of single-stranded DNA, followed by passage and rejoining.. In terms of biological role, releases the supercoiling and torsional tension of DNA, which is introduced during the DNA replication and transcription, by transiently cleaving and rejoining one strand of the DNA duplex. Introduces a single-strand break via transesterification at a target site in duplex DNA. The scissile phosphodiester is attacked by the catalytic tyrosine of the enzyme, resulting in the formation of a DNA-(5'-phosphotyrosyl)-enzyme intermediate and the expulsion of a 3'-OH DNA strand. The free DNA strand then undergoes passage around the unbroken strand, thus removing DNA supercoils. Finally, in the religation step, the DNA 3'-OH attacks the covalent intermediate to expel the active-site tyrosine and restore the DNA phosphodiester backbone. This Mycoplasma pneumoniae (strain ATCC 29342 / M129 / Subtype 1) (Mycoplasmoides pneumoniae) protein is DNA topoisomerase 1.